The chain runs to 95 residues: Large ribosomal subunit protein bL28 (95 aa).

Residues 1–22 form a disordered region; it reads MSRRCELTGKGPMTGNNVSHAN.

It belongs to the bacterial ribosomal protein bL28 family.

This is Large ribosomal subunit protein bL28 from Ruegeria pomeroyi (strain ATCC 700808 / DSM 15171 / DSS-3) (Silicibacter pomeroyi).